The following is a 391-amino-acid chain: uncharacterized protein (391 aa).

This sequence belongs to the mycobacterial PPE family.

This is an uncharacterized protein from Mycobacterium tuberculosis (strain CDC 1551 / Oshkosh).